Consider the following 333-residue polypeptide: 4-hydroxyproline 2-epimerase (333 aa).

Cys90 functions as the Proton acceptor in the catalytic mechanism. Substrate is bound by residues 91–92 (GH), His223, and Asp249. The active-site Proton donor is the Cys253. 254–255 (GT) is a binding site for substrate.

The protein belongs to the proline racemase family.

The catalysed reaction is trans-4-hydroxy-L-proline = cis-4-hydroxy-D-proline. Its function is as follows. Catalyzes the epimerization of trans-4-hydroxy-L-proline (t4LHyp) to cis-4-hydroxy-D-proline (c4DHyp). Is likely involved in a degradation pathway that converts t4LHyp to alpha-ketoglutarate. Displays no proline racemase activity. This chain is 4-hydroxyproline 2-epimerase, found in Shewanella loihica (strain ATCC BAA-1088 / PV-4).